The sequence spans 545 residues: Glucose-6-phosphate isomerase (545 aa).

Glutamate 353 acts as the Proton donor in catalysis. Catalysis depends on residues histidine 384 and lysine 510.

It belongs to the GPI family.

It is found in the cytoplasm. The enzyme catalyses alpha-D-glucose 6-phosphate = beta-D-fructose 6-phosphate. It functions in the pathway carbohydrate biosynthesis; gluconeogenesis. It participates in carbohydrate degradation; glycolysis; D-glyceraldehyde 3-phosphate and glycerone phosphate from D-glucose: step 2/4. Catalyzes the reversible isomerization of glucose-6-phosphate to fructose-6-phosphate. This chain is Glucose-6-phosphate isomerase, found in Aromatoleum aromaticum (strain DSM 19018 / LMG 30748 / EbN1) (Azoarcus sp. (strain EbN1)).